A 258-amino-acid polypeptide reads, in one-letter code: Ribosomal RNA small subunit methyltransferase A (258 aa).

Positions 13, 15, 40, 61, 86, and 106 each coordinate S-adenosyl-L-methionine.

It belongs to the class I-like SAM-binding methyltransferase superfamily. rRNA adenine N(6)-methyltransferase family. RsmA subfamily.

The protein resides in the cytoplasm. It carries out the reaction adenosine(1518)/adenosine(1519) in 16S rRNA + 4 S-adenosyl-L-methionine = N(6)-dimethyladenosine(1518)/N(6)-dimethyladenosine(1519) in 16S rRNA + 4 S-adenosyl-L-homocysteine + 4 H(+). Functionally, specifically dimethylates two adjacent adenosines (A1518 and A1519) in the loop of a conserved hairpin near the 3'-end of 16S rRNA in the 30S particle. May play a critical role in biogenesis of 30S subunits. The chain is Ribosomal RNA small subunit methyltransferase A from Coxiella burnetii (strain RSA 331 / Henzerling II).